A 322-amino-acid chain; its full sequence is MAFVSQFNQLPCKTLALNPPQPQLTSKPSVFPIASIGATARAAAGKSLISVRPAFKVRAVLNDDEWGEDKDEKYGDDSSVAVAEKEEEKPLEPSEIYKLKKALVDSFYGTDRGLRVSRDTRAEIVELITQLESKNPTPAPTEALTLLNGKWILAYTTFAGLFPLLSRNLPLVKVEEISQTIDSENLTVQNSVQFSGPLATTSITTNAKFEVRSPLRVHIKFEEGVIGTPQLTDSIVIPDNVDFLGQKIDFTPFNGIISSLQDTASNVAKTISSQPPIKFSISNTRVESWLLTTYLDEDLRISRGDGGSVFVLLKEGSSFLSL.

The transit peptide at 1-58 (MAFVSQFNQLPCKTLALNPPQPQLTSKPSVFPIASIGATARAAAGKSLISVRPAFKVR) directs the protein to the chromoplast. The tract at residues 67-88 (GEDKDEKYGDDSSVAVAEKEEE) is disordered.

This sequence belongs to the PAP/fibrillin family. As to expression, expressed in corollas. Not detected in fruits, stems, leaves, and roots.

The protein localises to the plastid. The protein resides in the chromoplast. Its function is as follows. May be involved in carotenoid sequestration within chromoplasts. This chain is Chromoplast-specific carotenoid-associated protein, chromoplastic (CHRC), found in Cucumis sativus (Cucumber).